Here is a 736-residue protein sequence, read N- to C-terminus: Oxysterol-binding protein-related protein 9 (736 aa).

N-acetylalanine is present on Ala2. The region spanning 2–99 (ASIMEGPLSK…WIHALEETIL (98 aa)) is the PH domain. A disordered region spans residues 231-367 (KSEQRPSSLP…DRDDDAEAGS (137 aa)). Residues 253–290 (TPTPNSTGSGHSPPSSSLTSPSHVNLSPNTVPEFSYSS) are compositionally biased toward low complexity. 5 positions are modified to phosphoserine: Ser306, Ser324, Ser325, Ser326, and Ser329. 2 stretches are compositionally biased toward polar residues: residues 314–329 (SSGSASVLTHSSSGNS) and 336–347 (TESLNSSLSNGT). Ser611 carries the phosphoserine modification.

Belongs to the OSBP family. As to quaternary structure, heterodimer with OSBPL11. Interacts with OSBPL10. Widely expressed.

It is found in the late endosome membrane. Its subcellular location is the golgi apparatus. It localises to the trans-Golgi network membrane. It catalyses the reaction a 1,2-diacyl-sn-glycero-3-phospho-(1D-myo-inositol 4-phosphate)(out) + a 1,2-diacyl-sn-glycero-3-phospho-L-serine(in) = a 1,2-diacyl-sn-glycero-3-phospho-(1D-myo-inositol 4-phosphate)(in) + a 1,2-diacyl-sn-glycero-3-phospho-L-serine(out). Functionally, interacts with OSBPL11 to function as lipid transfer proteins. Together they form a heterodimer that localizes at the ER-trans-Golgi membrane contact sites, and exchanges phosphatidylserine (1,2-diacyl-sn-glycero-3-phospho-L-serine, PS) for phosphatidylinositol-4-phosphate (1,2-diacyl-sn-glycero-3-phospho-(1D-myo-inositol 4-phosphate), PI(4)P) between the two organelles, a step that is critical for sphingomyelin synthesis in the Golgi complex. The polypeptide is Oxysterol-binding protein-related protein 9 (OSBPL9) (Homo sapiens (Human)).